Here is a 323-residue protein sequence, read N- to C-terminus: Porphobilinogen deaminase (323 aa).

The residue at position 240 (C240) is an S-(dipyrrolylmethanemethyl)cysteine.

Belongs to the HMBS family. In terms of assembly, monomer. It depends on dipyrromethane as a cofactor.

The enzyme catalyses 4 porphobilinogen + H2O = hydroxymethylbilane + 4 NH4(+). It functions in the pathway porphyrin-containing compound metabolism; protoporphyrin-IX biosynthesis; coproporphyrinogen-III from 5-aminolevulinate: step 2/4. Its function is as follows. Tetrapolymerization of the monopyrrole PBG into the hydroxymethylbilane pre-uroporphyrinogen in several discrete steps. This chain is Porphobilinogen deaminase, found in Sulfurovum sp. (strain NBC37-1).